The primary structure comprises 407 residues: Lysosome-associated membrane glycoprotein 1 (407 aa).

A signal peptide spans 1-21; that stretch reads MAAPGARRPLLLLLLAGLAHS. The first lumenal domain stretch occupies residues 22 to 189; sequence APALFEVKDN…SKEETRCPQD (168 aa). Over 22-371 the chain is Lumenal; it reads APALFEVKDN…VEECVQDGNN (350 aa). Asn32, Asn59, Asn71, Asn79, Asn102, Asn116, Asn125, Asn145, Asn160, and Asn178 each carry an N-linked (GlcNAc...) asparagine glycan. Cys36 and Cys75 are joined by a disulfide. A disulfide bridge connects residues Cys150 and Cys186. A disordered region spans residues 180–211; sequence SKEETRCPQDQPSPTTGPPSPSPPLVPTNPSV. Positions 190 to 219 are hinge; the sequence is QPSPTTGPPSPSPPLVPTNPSVSKYNVTGD. Pro residues predominate over residues 194 to 206; it reads TTGPPSPSPPLVP. N-linked (GlcNAc...) asparagine glycosylation is found at Asn215, Asn220, Asn233, Asn241, Asn271, Asn283, Asn297, and Asn312. A second lumenal domain region spans residues 220-371; it reads NGTCLLASMA…VEECVQDGNN (152 aa). The cysteines at positions 223 and 260 are disulfide-linked. Cys328 and Cys365 form a disulfide bridge. The helical transmembrane segment at 372–395 threads the bilayer; sequence MLIPIAVGGALAGLVLIVLIAYLI. The Cytoplasmic segment spans residues 396-407; it reads GRKRSHAGYQTI.

It belongs to the LAMP family. In terms of assembly, interacts with ABCB9; this interaction strongly stabilizes ABCB9 and protects ABCB9 against lysosomal degradation. Interacts with FURIN. Interacts with TMEM175; inhibiting the proton channel activity of TMEM175. O- and N-glycosylated; some of the N-glycans attached to LAMP-1 are polylactosaminoglycans.

The protein resides in the lysosome membrane. It is found in the endosome membrane. It localises to the late endosome membrane. Its subcellular location is the cell membrane. The protein localises to the cytolytic granule membrane. Its function is as follows. Lysosomal membrane glycoprotein which plays an important role in lysosome biogenesis, lysosomal pH regulation, autophagy and cholesterol homeostasis. Acts as an important regulator of lysosomal lumen pH regulation by acting as a direct inhibitor of the proton channel TMEM175, facilitating lysosomal acidification for optimal hydrolase activity. Also plays an important role in NK-cells cytotoxicity. Mechanistically, participates in cytotoxic granule movement to the cell surface and perforin trafficking to the lytic granule. In addition, protects NK-cells from degranulation-associated damage induced by their own cytotoxic granule content. Presents carbohydrate ligands to selectins. This chain is Lysosome-associated membrane glycoprotein 1 (Lamp1), found in Rattus norvegicus (Rat).